Consider the following 188-residue polypeptide: Protein-arginine kinase activator protein (188 aa).

4 consecutive short sequence motifs (CXXC metal binding motif) follow at residues 3 to 6 (CENC), 29 to 32 (CQTC), 87 to 90 (CPSC), and 105 to 108 (CANC). Residues 145-180 (KRKIEEKNEYLKKLIEIQDFEEAAIVRDEIKALKAE) form the UVR domain.

In terms of assembly, interacts with McsB and CtsR; the CXXC motifs are needed for the binding.

In terms of biological role, activates the phosphorylation activity of the protein-arginine kinase McsB. May function as an important molecule for oxidative tolerance in various types of stress including that of heavy metals. Binds to Cu(2+), Zn(2+), Co(2+) and Cd(2+) via its CXXC metal binding motifs. This is Protein-arginine kinase activator protein from Staphylococcus aureus (strain NCTC 8325 / PS 47).